We begin with the raw amino-acid sequence, 250 residues long: DNA repair protein RecO (250 aa).

This sequence belongs to the RecO family.

In terms of biological role, involved in DNA repair and RecF pathway recombination. The chain is DNA repair protein RecO from Syntrophobacter fumaroxidans (strain DSM 10017 / MPOB).